A 405-amino-acid chain; its full sequence is BRCA1-A complex subunit Abraxas 1 (405 aa).

In terms of domain architecture, MPN spans 7 to 154 (LGVLSGFVLG…CTHCLEHGLY (148 aa)). S48 carries the phosphoserine modification. The stretch at 208–262 (SLKEVRKINEMYAAIQEELKTICQKVEQSEREVEKLLMDVNRLKEVRKKQQAQAK) forms a coiled coil. Positions 333–405 (ASPAPAAPLS…DTDYPRSPTF (73 aa)) are disordered. S382, S383, S392, and S402 each carry phosphoserine. The span at 386–397 (IDTEVGSPEDDT) shows a compositional bias: acidic residues. The pSXXF motif signature appears at 402 to 405 (SPTF).

Belongs to the FAM175 family. Abraxas subfamily. As to quaternary structure, component of the ARISC complex, at least composed of UIMC1/RAP80, ABRAXAS1, BRCC3/BRCC36, BABAM2 and BABAM1/NBA1. Component of the BRCA1-A complex, at least composed of the BRCA1, BARD1, UIMC1/RAP80, ABRAXAS1, BRCC3/BRCC36, BABAM2 and BABAM1/NBA1. In the complex, interacts directly with UIMC1/RAP80, BRCC3/BRCC36 and BABAM2. Homodimer. Interacts directly (when phosphorylated at Ser-402) with BRCA1. The phosphorylated homodimer can interact directly with two BRCA1 chains, giving rise to a heterotetramer. Binds polyubiquitin. In terms of processing, phosphorylation of Ser-402 of the pSXXF motif by ATM or ATR constitutes a specific recognition motif for the BRCT domain of BRCA1.

The protein localises to the nucleus. Functionally, involved in DNA damage response and double-strand break (DSB) repair. Component of the BRCA1-A complex, acting as a central scaffold protein that assembles the various components of the complex and mediates the recruitment of BRCA1. The BRCA1-A complex specifically recognizes 'Lys-63'-linked ubiquitinated histones H2A and H2AX at DNA lesion sites, leading to target the BRCA1-BARD1 heterodimer to sites of DNA damage at DSBs. This complex also possesses deubiquitinase activity that specifically removes 'Lys-63'-linked ubiquitin on histones H2A and H2AX. The sequence is that of BRCA1-A complex subunit Abraxas 1 from Rattus norvegicus (Rat).